A 258-amino-acid polypeptide reads, in one-letter code: Small ribosomal subunit protein uS2 (258 aa).

Residues 226 to 258 form a disordered region; sequence KQGQDDEETLEVDFKENADGSEEIVSAEENPED. The span at 244-258 shows a compositional bias: acidic residues; it reads DGSEEIVSAEENPED.

It belongs to the universal ribosomal protein uS2 family.

This chain is Small ribosomal subunit protein uS2, found in Lactobacillus acidophilus (strain ATCC 700396 / NCK56 / N2 / NCFM).